The chain runs to 99 residues: Large ribosomal subunit protein uL23 (99 aa).

This sequence belongs to the universal ribosomal protein uL23 family. As to quaternary structure, part of the 50S ribosomal subunit. Contacts protein L29, and trigger factor when it is bound to the ribosome.

In terms of biological role, one of the early assembly proteins it binds 23S rRNA. One of the proteins that surrounds the polypeptide exit tunnel on the outside of the ribosome. Forms the main docking site for trigger factor binding to the ribosome. The chain is Large ribosomal subunit protein uL23 from Alkalilimnicola ehrlichii (strain ATCC BAA-1101 / DSM 17681 / MLHE-1).